A 476-amino-acid chain; its full sequence is Adenosylhomocysteinase (476 aa).

3 residues coordinate substrate: Thr-62, Asp-141, and Glu-201. 202–204 (TTT) is an NAD(+) binding site. Residues Lys-231 and Asp-235 each coordinate substrate. NAD(+) contacts are provided by residues Asn-236, 265-270 (GYGDVG), Glu-288, Asn-323, 344-346 (IGH), and Asn-389.

It belongs to the adenosylhomocysteinase family. It depends on NAD(+) as a cofactor.

The protein resides in the cytoplasm. The enzyme catalyses S-adenosyl-L-homocysteine + H2O = L-homocysteine + adenosine. It functions in the pathway amino-acid biosynthesis; L-homocysteine biosynthesis; L-homocysteine from S-adenosyl-L-homocysteine: step 1/1. In terms of biological role, may play a key role in the regulation of the intracellular concentration of adenosylhomocysteine. This Myxococcus xanthus (strain DK1622) protein is Adenosylhomocysteinase.